The primary structure comprises 519 residues: Chaperone SurA (519 aa).

Residues 1–31 (MMRSLHSLRRMSGTVLALMLAAGLPLSAAQA) form the signal peptide. Composition is skewed to low complexity over residues 31–45 (AQPAKPAPKGDQKPA) and 197–207 (PAAAQATRAPA). Disordered stretches follow at residues 31 to 50 (AQPAKPAPKGDQKPATPAPS) and 196 to 221 (NPAAAQATRAPAPQQPQPQPRQPAQS). Positions 223 to 324 (PAMLVLAQIL…NGFHILKVVD (102 aa)) constitute a PpiC 1 domain. The interval 328–361 (GGQPAQAARPAPAPAPQQPSSFQEGPSVAAPQGP) is disordered. The PpiC 2 domain maps to 364–463 (VTQTHARHIL…FGWHLIQVLE (100 aa)).

It is found in the periplasm. It carries out the reaction [protein]-peptidylproline (omega=180) = [protein]-peptidylproline (omega=0). In terms of biological role, chaperone involved in the correct folding and assembly of outer membrane proteins. Recognizes specific patterns of aromatic residues and the orientation of their side chains, which are found more frequently in integral outer membrane proteins. May act in both early periplasmic and late outer membrane-associated steps of protein maturation. The protein is Chaperone SurA of Bordetella pertussis (strain Tohama I / ATCC BAA-589 / NCTC 13251).